Here is a 132-residue protein sequence, read N- to C-terminus: Flagellar assembly factor FliW (132 aa).

The protein belongs to the FliW family. As to quaternary structure, interacts with translational regulator CsrA and flagellin(s).

Its subcellular location is the cytoplasm. Its function is as follows. Acts as an anti-CsrA protein, binds CsrA and prevents it from repressing translation of its target genes, one of which is flagellin. Binds to flagellin and participates in the assembly of the flagellum. The chain is Flagellar assembly factor FliW from Borreliella afzelii (strain PKo) (Borrelia afzelii).